The sequence spans 119 residues: Large ribosomal subunit protein bL20 (119 aa).

The protein belongs to the bacterial ribosomal protein bL20 family.

Its function is as follows. Binds directly to 23S ribosomal RNA and is necessary for the in vitro assembly process of the 50S ribosomal subunit. It is not involved in the protein synthesizing functions of that subunit. The sequence is that of Large ribosomal subunit protein bL20 from Bordetella avium (strain 197N).